The primary structure comprises 434 residues: MFS-type transporter AFUA_1G00970 (434 aa).

12 helical membrane-spanning segments follow: residues 21–41, 60–80, 87–107, 112–132, 145–165, 182–202, 240–260, 278–298, 301–321, 327–347, 364–384, and 393–413; these read VIGG…FGVF, WIGS…GVLV, VLLI…SLCS, IFLA…WPPF, LALG…SIMI, VLGF…TEPP, VFIS…NPFF, YMIS…GIVA, VGHY…SFCW, LTGL…ILSL, AIGF…PIGG, and LSLS…MGYA. Residues 201–225 are disordered; sequence PPKQSQPQPRPALEATVEGGSASPT.

The protein belongs to the major facilitator superfamily. Monocarboxylate porter (TC 2.A.1.13) family.

The protein localises to the cell membrane. In terms of biological role, MFS-type transporter; part of the gene cluster that mediates the biosynthesis of fumigermin that inhibits germination of spores of the inducing S.rapamycinicus, and thus helps the fungus to defend resources in the shared habitat against a bacterial competitor. May be involved in the secretion of fumigermin. The chain is MFS-type transporter AFUA_1G00970 from Aspergillus fumigatus (strain ATCC MYA-4609 / CBS 101355 / FGSC A1100 / Af293) (Neosartorya fumigata).